Consider the following 540-residue polypeptide: Medium/long-chain-fatty-acid--[acyl-carrier-protein] ligase FadD10 (540 aa).

T177 contacts Mg(2+). The ATP site is built by I226, V316, and S320. E321 contacts Mg(2+). ATP is bound at residue D408.

This sequence belongs to the ATP-dependent AMP-binding enzyme family. In terms of assembly, homodimer. Requires Mg(2+) as cofactor.

It localises to the cytoplasm. It carries out the reaction a medium-chain fatty acid + holo-[ACP] + ATP = a medium-chain fatty acyl-[ACP] + AMP + diphosphate. It catalyses the reaction a medium-chain fatty acid + ATP + H(+) = a medium-chain fatty acyl-AMP + diphosphate. The catalysed reaction is a medium-chain fatty acyl-AMP + holo-[ACP] = a medium-chain fatty acyl-[ACP] + AMP + H(+). The enzyme catalyses a long-chain fatty acid + holo-[ACP] + ATP = a long-chain fatty acyl-[ACP] + AMP + diphosphate. It carries out the reaction a long-chain fatty acid + ATP + H(+) = a long-chain fatty acyl-AMP + diphosphate. It catalyses the reaction a long-chain fatty acyl-AMP + holo-[ACP] = a long-chain fatty acyl-[ACP] + AMP + H(+). The catalysed reaction is a (2E)-enoyl fatty acid + holo-[ACP] + ATP = a (2E)-enoyl-[ACP] + AMP + diphosphate. The enzyme catalyses a (2E)-enoyl fatty acid + ATP + H(+) = a (2E)-2-fatty-enoyl-AMP + diphosphate. It carries out the reaction a (2E)-2-fatty-enoyl-AMP + holo-[ACP] = a (2E)-enoyl-[ACP] + AMP + H(+). It catalyses the reaction a (3R)-3-isocyanyl-fatty acid + holo-[ACP] + ATP = a (3R)-3-isocyanyl-fatty acyl-[ACP] + AMP + diphosphate. The catalysed reaction is a (3R)-3-isocyanyl-fatty acid + ATP + H(+) = a (3R)-3-isocyanyl-fatty acyl-AMP + diphosphate. The enzyme catalyses a (3R)-3-isocyanyl-fatty acyl-AMP + holo-[ACP] = a (3R)-3-isocyanyl-fatty acyl-[ACP] + AMP + H(+). It functions in the pathway lipid metabolism; fatty acid metabolism. Its function is as follows. Acyl:acyl-carrier protein ligase involved in the biosynthesis of a unique class of isonitrile lipopeptides (INLPs) that seem to function as virulence factors in M.tuberculosis and to play a role in metal acquisition. Catalyzes the activation of medium/long-chain fatty acids as acyl-adenylates (acyl-AMP), which are then transferred to the phosphopantetheine arm of the acyl-carrier protein (ACP) MT0109. Acts twice during the INLP pathway, catalyzing the activation of a (2E)-enoyl fatty acid as well as the corresponding (3R)-3-isocyanyl-fatty acid as acyl-adenylates (acyl-AMP), and then the acyl transfer to the dedicated acyl-carrier protein MT0109. In Mycobacterium tuberculosis (strain CDC 1551 / Oshkosh), this protein is Medium/long-chain-fatty-acid--[acyl-carrier-protein] ligase FadD10 (fadD10).